The sequence spans 384 residues: uncharacterized protein (384 aa).

Disordered regions lie at residues 133 to 257 (RQNS…TNQD) and 297 to 368 (ERTP…STAT). Positions 143–157 (PSTSSEPEPQPSTSS) are enriched in low complexity. Over residues 302–315 (DQTDITDDSADWSE) the composition is skewed to acidic residues. Over residues 316–342 (GETRRPSHSEVGERRLSRENNSEDPNR) the composition is skewed to basic and acidic residues. The segment covering 343 to 363 (SRSRSRSRERRRRRPRVRPGR) has biased composition (basic residues).

This is an uncharacterized protein from Gallid herpesvirus 2 (strain Chicken/Md5/ATCC VR-987) (GaHV-2).